An 89-amino-acid chain; its full sequence is Acylphosphatase (89 aa).

The 86-residue stretch at 4 to 89 (CVRCLIAGRV…IPEIQMFEVR (86 aa)) folds into the Acylphosphatase-like domain. Residues Arg19 and Asn37 contribute to the active site.

Belongs to the acylphosphatase family.

The catalysed reaction is an acyl phosphate + H2O = a carboxylate + phosphate + H(+). This Nitrosococcus oceani (strain ATCC 19707 / BCRC 17464 / JCM 30415 / NCIMB 11848 / C-107) protein is Acylphosphatase (acyP).